A 324-amino-acid polypeptide reads, in one-letter code: PDZ domain-containing protein MAGIX (324 aa).

The disordered stretch occupies residues 1–26; sequence MDSRAGNTADPRGGRRGGGLQGSRSP. The 85-residue stretch at 128–212 folds into the PDZ domain; the sequence is SVELTRGPAG…HLCLVLQRPQ (85 aa). Residues 216 to 241 show a composition bias toward basic and acidic residues; that stretch reads GSRIKEVGGHRKTDRSLDPRGSRVES. The interval 216–263 is disordered; sequence GSRIKEVGGHRKTDRSLDPRGSRVESRSTISPVHHRPKTRTSPRPSPE. Ser-261 is modified (phosphoserine).

The sequence is that of PDZ domain-containing protein MAGIX (Magix) from Mus musculus (Mouse).